Reading from the N-terminus, the 266-residue chain is Gasdermin bGSDM (266 aa).

A run of 4 beta stranded transmembrane segments spans residues Leu67 to Ile83, Lys95 to Gln113, Ser162 to Ala179, and Ala187 to Tyr203.

It belongs to the bacterial gasdermin family. In terms of assembly, monomer. Forms large, homooligomeric ring-shaped pores when inserted in membranes.

It localises to the cytoplasm. It is found in the cell inner membrane. Its activity is regulated as follows. The full-length protein before cleavage is inactive: intramolecular interactions between the N-terminal domain and the C-terminal region mediate autoinhibition. The pyroptosis-like-inducing activity is carried by the released N-terminal domain (Gasdermin bGSDM, N-terminus). In terms of biological role, precursor of a pore-forming protein involved in defense against bacteriophages. Expression of bGSDM and the neighboring protease gene (Gilli_2517) is not toxic in E.coli. Cleavage of this precursor by its dedicated protease releases the active moiety (gasdermin bGSDM, N-terminus) which inserts into membranes, forming pores and triggering cell death. Pore-forming protein that causes membrane permeabilization via a pyroptosis-like activity. Makes ring-like pores when released. This is Gasdermin bGSDM from Gillisia limnaea (strain DSM 15749 / LMG 21470 / R-8282).